The following is a 344-amino-acid chain: Heat-inducible transcription repressor HrcA (344 aa).

The protein belongs to the HrcA family.

Functionally, negative regulator of class I heat shock genes (grpE-dnaK-dnaJ and groELS operons). Prevents heat-shock induction of these operons. The polypeptide is Heat-inducible transcription repressor HrcA (Desulforudis audaxviator (strain MP104C)).